Consider the following 273-residue polypeptide: Flagellin FljK (273 aa).

Belongs to the bacterial flagellin family. In C.crescentus, the flagellar filament is composed of multiple flagellins of 29 kDa; 27 kDa and 25 kDa.

Its subcellular location is the secreted. The protein resides in the bacterial flagellum. In terms of biological role, flagellin is the subunit protein which polymerizes to form the filaments of bacterial flagella. The protein is Flagellin FljK (fljK) of Caulobacter vibrioides (strain ATCC 19089 / CIP 103742 / CB 15) (Caulobacter crescentus).